The sequence spans 563 residues: Sulfite reductase [NADPH] hemoprotein beta-component (563 aa).

The [4Fe-4S] cluster site is built by C427, C433, C472, and C476. C476 is a binding site for siroheme.

Belongs to the nitrite and sulfite reductase 4Fe-4S domain family. As to quaternary structure, alpha(8)-beta(8). The alpha component is a flavoprotein, the beta component is a hemoprotein. It depends on siroheme as a cofactor. The cofactor is [4Fe-4S] cluster.

It catalyses the reaction hydrogen sulfide + 3 NADP(+) + 3 H2O = sulfite + 3 NADPH + 4 H(+). The protein operates within sulfur metabolism; hydrogen sulfide biosynthesis; hydrogen sulfide from sulfite (NADPH route): step 1/1. In terms of biological role, component of the sulfite reductase complex that catalyzes the 6-electron reduction of sulfite to sulfide. This is one of several activities required for the biosynthesis of L-cysteine from sulfate. This chain is Sulfite reductase [NADPH] hemoprotein beta-component, found in Shewanella frigidimarina (strain NCIMB 400).